A 424-amino-acid chain; its full sequence is Serine--tRNA ligase (424 aa).

Residue 231–233 (TAE) coordinates L-serine. Position 261–263 (261–263 (RSE)) interacts with ATP. Position 284 (Glu284) interacts with L-serine. 348–351 (ETSS) lines the ATP pocket. Residue Ser383 coordinates L-serine.

The protein belongs to the class-II aminoacyl-tRNA synthetase family. Type-1 seryl-tRNA synthetase subfamily. As to quaternary structure, homodimer. The tRNA molecule binds across the dimer.

It localises to the cytoplasm. It carries out the reaction tRNA(Ser) + L-serine + ATP = L-seryl-tRNA(Ser) + AMP + diphosphate + H(+). The enzyme catalyses tRNA(Sec) + L-serine + ATP = L-seryl-tRNA(Sec) + AMP + diphosphate + H(+). It participates in aminoacyl-tRNA biosynthesis; selenocysteinyl-tRNA(Sec) biosynthesis; L-seryl-tRNA(Sec) from L-serine and tRNA(Sec): step 1/1. Functionally, catalyzes the attachment of serine to tRNA(Ser). Is also able to aminoacylate tRNA(Sec) with serine, to form the misacylated tRNA L-seryl-tRNA(Sec), which will be further converted into selenocysteinyl-tRNA(Sec). The sequence is that of Serine--tRNA ligase from Metamycoplasma arthritidis (strain 158L3-1) (Mycoplasma arthritidis).